The chain runs to 60 residues: Large ribosomal subunit protein bL32 (60 aa).

Belongs to the bacterial ribosomal protein bL32 family.

The sequence is that of Large ribosomal subunit protein bL32 from Pseudothermotoga lettingae (strain ATCC BAA-301 / DSM 14385 / NBRC 107922 / TMO) (Thermotoga lettingae).